The primary structure comprises 254 residues: Casein kinase II subunit beta-2 (254 aa).

This sequence belongs to the casein kinase 2 subunit beta family. In terms of assembly, tetramer composed of two alpha chains, one beta chain and one beta' chain. Phosphorylated by alpha subunit.

In terms of biological role, regulatory subunit of casein kinase II/CK2. As part of the kinase complex regulates the basal catalytic activity of the alpha subunit a constitutively active serine/threonine-protein kinase that phosphorylates a large number of substrates containing acidic residues C-terminal to the phosphorylated serine or threonine. The protein is Casein kinase II subunit beta-2 of Schizosaccharomyces pombe (strain 972 / ATCC 24843) (Fission yeast).